A 129-amino-acid chain; its full sequence is uncharacterized protein (129 aa).

This is an uncharacterized protein from Mycoplasma pneumoniae (strain ATCC 29342 / M129 / Subtype 1) (Mycoplasmoides pneumoniae).